We begin with the raw amino-acid sequence, 360 residues long: Peptide chain release factor 1 (360 aa).

Q233 is modified (N5-methylglutamine). The segment at 286-305 is disordered; sequence NEIAQERKSQVGTGDRSERI.

Belongs to the prokaryotic/mitochondrial release factor family. Post-translationally, methylated by PrmC. Methylation increases the termination efficiency of RF1.

Its subcellular location is the cytoplasm. In terms of biological role, peptide chain release factor 1 directs the termination of translation in response to the peptide chain termination codons UAG and UAA. The polypeptide is Peptide chain release factor 1 (Acetivibrio thermocellus (strain ATCC 27405 / DSM 1237 / JCM 9322 / NBRC 103400 / NCIMB 10682 / NRRL B-4536 / VPI 7372) (Clostridium thermocellum)).